Consider the following 177-residue polypeptide: Platelet glycoprotein IX (177 aa).

An N-terminal signal peptide occupies residues 1 to 16 (MPAWGALFLLWATAEA). One can recognise an LRRNT domain in the interval 17–51 (TKDCPSPCTCRALETMGLWVDCRGHGLTALPALPA). Topologically, residues 17–147 (TKDCPSPCTC…QLQASWVRPG (131 aa)) are extracellular. Asn60 is a glycosylation site (N-linked (GlcNAc...) asparagine). One copy of the LRR repeat lies at 60–83 (NNSLQSVPPGAFDHLPQLQTLDVT). Residues 85 to 137 (NPWHCDCSLTYLRLWLEDRTPEALLQVRCASPSLAAHGPLGRLTGYQLGSCGW) form the LRRCT domain. Residues 148–168 (VLWDVALVAVAALGLALLAGL) traverse the membrane as a helical segment. Residues 169 to 177 (LCATTEALD) are Cytoplasmic-facing.

As to quaternary structure, two GP-Ib beta are disulfide-linked to one GP-Ib alpha. GP-IX is complexed with the GP-Ib heterodimer via a non covalent linkage.

It is found in the membrane. Functionally, the GPIb-V-IX complex functions as the vWF receptor and mediates vWF-dependent platelet adhesion to blood vessels. The adhesion of platelets to injured vascular surfaces in the arterial circulation is a critical initiating event in hemostasis. GP-IX may provide for membrane insertion and orientation of GP-Ib. The protein is Platelet glycoprotein IX (GP9) of Homo sapiens (Human).